The following is a 376-amino-acid chain: Putative phosphoserine aminotransferase (376 aa).

Residue arginine 50 coordinates L-glutamate. Residues 84 to 85 (AT), phenylalanine 108, threonine 154, aspartate 176, and glutamine 199 each bind pyridoxal 5'-phosphate. Lysine 200 is subject to N6-(pyridoxal phosphate)lysine. 251–252 (NT) provides a ligand contact to pyridoxal 5'-phosphate.

It belongs to the class-V pyridoxal-phosphate-dependent aminotransferase family. SerC subfamily. As to quaternary structure, homodimer. It depends on pyridoxal 5'-phosphate as a cofactor.

Its subcellular location is the cytoplasm. The enzyme catalyses O-phospho-L-serine + 2-oxoglutarate = 3-phosphooxypyruvate + L-glutamate. It catalyses the reaction 4-(phosphooxy)-L-threonine + 2-oxoglutarate = (R)-3-hydroxy-2-oxo-4-phosphooxybutanoate + L-glutamate. It participates in amino-acid biosynthesis; L-serine biosynthesis; L-serine from 3-phospho-D-glycerate: step 2/3. It functions in the pathway cofactor biosynthesis; pyridoxine 5'-phosphate biosynthesis; pyridoxine 5'-phosphate from D-erythrose 4-phosphate: step 3/5. Catalyzes the reversible conversion of 3-phosphohydroxypyruvate to phosphoserine and of 3-hydroxy-2-oxo-4-phosphonooxybutanoate to phosphohydroxythreonine. In Mycobacterium bovis (strain ATCC BAA-935 / AF2122/97), this protein is Putative phosphoserine aminotransferase.